We begin with the raw amino-acid sequence, 136 residues long: Globin-2 (136 aa).

Residues 1–134 (VSQADIAAVQ…ILSQMKIALS (134 aa)) enclose the Globin domain. Heme b is bound at residue H89.

It belongs to the globin family. Homodimer.

This is Globin-2 from Phreagena soyoae (Deep-sea cold-seep clam).